The chain runs to 63 residues: Ct-IT2 (63 aa).

One can recognise an LCN-type CS-alpha/beta domain in the interval 1–63; that stretch reads KDGYPMDSKG…VWDKATNKCG (63 aa). Cystine bridges form between Cys-11-Cys-62, Cys-15-Cys-36, Cys-22-Cys-43, and Cys-26-Cys-45. Residue Gly-63 is modified to Glycine amide.

As to expression, expressed by the venom gland.

The protein resides in the secreted. Functionally, beta toxins bind voltage-independently at site-4 of sodium channels (Nav) and shift the voltage of activation toward more negative potentials thereby affecting sodium channel activation and promoting spontaneous and repetitive firing. Is highly active on insects, since it provokes paralysis and death when injected into crickets. The polypeptide is Ct-IT2 (Centruroides tecomanus (Scorpion)).